The sequence spans 513 residues: Proline-rich receptor-like protein kinase PERK3 (513 aa).

Residues 1–123 (MARSNRCVPQ…SPPSPSRLST (123 aa)) lie on the Extracellular side of the membrane. N11 carries N-linked (GlcNAc...) asparagine glycosylation. Over residues 27-36 (LKSRWQQITM) the composition is skewed to polar residues. The interval 27 to 119 (LKSRWQQITM…GFSLSPPSPS (93 aa)) is disordered. An N-linked (GlcNAc...) asparagine glycan is attached at N66. Residues 78 to 89 (PSTSTPPRLGNR) show a composition bias toward low complexity. Residues 99-111 (GQEPTTPTMTPGF) show a composition bias toward polar residues. The helical transmembrane segment at 124 to 144 (GAVVGISIGGGVFVLTLIFFL) threads the bilayer. Over 145–513 (CKKKRPRDDK…TAQRYGGDSL (369 aa)) the chain is Cytoplasmic. T172 is subject to Phosphothreonine. Residues 183–334 (FSEANLLGEG…DFGLAKIALD (152 aa)) form the Protein kinase domain. ATP-binding positions include 189 to 197 (LGEGGFGFV) and K211. At Y256 the chain carries Phosphotyrosine. The Proton acceptor role is filled by D307. Position 340 is a phosphoserine (S340). T341 and T346 each carry phosphothreonine. The residue at position 354 (Y354) is a Phosphotyrosine.

Belongs to the protein kinase superfamily. Ser/Thr protein kinase family. In terms of tissue distribution, expressed at low levels in inflorescence bolt, flower buds, siliques, roots, seedlings and leaves.

The protein resides in the cell membrane. The catalysed reaction is L-seryl-[protein] + ATP = O-phospho-L-seryl-[protein] + ADP + H(+). The enzyme catalyses L-threonyl-[protein] + ATP = O-phospho-L-threonyl-[protein] + ADP + H(+). The protein is Proline-rich receptor-like protein kinase PERK3 (PERK3) of Arabidopsis thaliana (Mouse-ear cress).